Consider the following 539-residue polypeptide: MIO-dependent tyrosine 2,3-aminomutase (539 aa).

Y63 acts as the Proton donor/acceptor in catalysis. H93 contributes to the substrate binding site. Positions 152–154 (ASG) form a cross-link, 5-imidazolinone (Ala-Gly). Residue S153 is modified to 2,3-didehydroalanine (Ser). Residues N205 and R311 each coordinate substrate.

This sequence belongs to the TAL/TAM family. As to quaternary structure, homotetramer; dimer of dimers. Contains an active site 4-methylidene-imidazol-5-one (MIO), which is formed autocatalytically by cyclization and dehydration of residues Ala-Ser-Gly.

It carries out the reaction L-tyrosine = 3-amino-3-(4-hydroxyphenyl)propanoate. The catalysed reaction is L-tyrosine = (E)-4-coumarate + NH4(+). In terms of biological role, involved in the biosynthesis of the enediyne antitumor antibiotic C-1027. Catalyzes the MIO-dependent deamination of L-tyrosine generating the corresponding alpha,beta-unsaturated acid, (S)-beta-tyrosine. This chain is MIO-dependent tyrosine 2,3-aminomutase, found in Streptomyces globisporus.